The primary structure comprises 340 residues: MKQVVIHDPTLRDGQHAVHHRLGLTELRRYAEAADAARVPVVEVGHGNGLGASSLQVGLAAATDDAMLSTVREALRHSRLGTFMLPGWGTSDDLRRAISHGVDVFRVGVHATEASLAEHHLGFLRDAGAEAHCVLMMSHMASPGELAEQAARAVGYGAQAVGIMDSAGHFLPPDVTARIGAIVEAVGTVPVIFHGHNNLGMAVANSVAAAEAGARIIDGCARGFGAGAGNTQLEVLVPVLERSGFATGIDLYALLDAADLAERELMPAPPVPASMSIVSGLAGVFSGFKHRVVELAGAAGVDPREVFFELGRRQAIAGQEDLIVDVVAELSGRGPKTDAA.

The region spanning 4–255 (VVIHDPTLRD…ATGIDLYALL (252 aa)) is the Pyruvate carboxyltransferase domain. 12–13 (RD) serves as a coordination point for substrate. Aspartate 13 contacts Mn(2+). Histidine 16 functions as the Proton acceptor in the catalytic mechanism. Substrate-binding residues include serine 166 and histidine 194. Positions 194 and 196 each coordinate Mn(2+).

It belongs to the 4-hydroxy-2-oxovalerate aldolase family.

It carries out the reaction (S)-4-hydroxy-2-oxopentanoate = acetaldehyde + pyruvate. The chain is 4-hydroxy-2-oxovalerate aldolase from Streptomyces griseus subsp. griseus (strain JCM 4626 / CBS 651.72 / NBRC 13350 / KCC S-0626 / ISP 5235).